Reading from the N-terminus, the 568-residue chain is Proline--tRNA ligase (568 aa).

It belongs to the class-II aminoacyl-tRNA synthetase family. ProS type 1 subfamily. As to quaternary structure, homodimer.

The protein resides in the cytoplasm. The enzyme catalyses tRNA(Pro) + L-proline + ATP = L-prolyl-tRNA(Pro) + AMP + diphosphate. Its function is as follows. Catalyzes the attachment of proline to tRNA(Pro) in a two-step reaction: proline is first activated by ATP to form Pro-AMP and then transferred to the acceptor end of tRNA(Pro). As ProRS can inadvertently accommodate and process non-cognate amino acids such as alanine and cysteine, to avoid such errors it has two additional distinct editing activities against alanine. One activity is designated as 'pretransfer' editing and involves the tRNA(Pro)-independent hydrolysis of activated Ala-AMP. The other activity is designated 'posttransfer' editing and involves deacylation of mischarged Ala-tRNA(Pro). The misacylated Cys-tRNA(Pro) is not edited by ProRS. This chain is Proline--tRNA ligase, found in Lysinibacillus sphaericus (strain C3-41).